The primary structure comprises 291 residues: Taste receptor type 2 member 16 (291 aa).

A topological domain (extracellular) is located at residue M1. A helical membrane pass occupies residues 2–22 (IPIQLTVFFMIIYVLESLTII). Topologically, residues 23–41 (VQSSLIVAVLGREWLQVRR) are cytoplasmic. The chain crosses the membrane as a helical span at residues 42-62 (LMPVDMILISLGISRFCLQWA). Over 63–84 (SMLNNFCSYFNLNYVLCNLTIT) the chain is Extracellular. N-linked (GlcNAc...) asparagine glycosylation occurs at N80. Residues 85–105 (WEFFNILTFWLNSLLTVFYCI) traverse the membrane as a helical segment. The Cytoplasmic portion of the chain corresponds to 106 to 125 (KASSFTHHIFLWLRWRILRL). Residues 126-146 (FPWILLGSLMITCVTIIPSAI) traverse the membrane as a helical segment. The Extracellular portion of the chain corresponds to 147–182 (GNYIQIQLLTMEHLPRNSTVTDKLEKFHQYQFQAHT). N163 carries an N-linked (GlcNAc...) asparagine glycan. A helical membrane pass occupies residues 183-203 (VALVIPFILFLASTILLMASL). Residues 204 to 228 (TKQIQHHSTGHCNPSMKAHFTALRS) are Cytoplasmic-facing. Residues 229–249 (LAVLFIVFTSYFLTILITIIG) traverse the membrane as a helical segment. Topologically, residues 250–257 (TLFDKRCW) are extracellular. Residues 258-278 (LWVWEAFVYAFILMHSTSLML) traverse the membrane as a helical segment. The Cytoplasmic segment spans residues 279–291 (SSPTLKRILKGKC).

This sequence belongs to the G-protein coupled receptor T2R family. As to quaternary structure, interacts with RTP3 and RTP4.

The protein resides in the cell membrane. In terms of biological role, receptor that may play a role in the perception of bitterness and is gustducin-linked. May play a role in sensing the chemical composition of the gastrointestinal content. The activity of this receptor may stimulate alpha gustducin, mediate PLC-beta-2 activation and lead to the gating of TRPM5. This is Taste receptor type 2 member 16 (TAS2R16) from Pan paniscus (Pygmy chimpanzee).